We begin with the raw amino-acid sequence, 436 residues long: 3-ketoacyl-CoA thiolase (436 aa).

Residue Cys-99 is the Acyl-thioester intermediate of the active site. Residues His-392 and Cys-422 each act as proton acceptor in the active site.

It belongs to the thiolase-like superfamily. Thiolase family. As to quaternary structure, heterotetramer of two alpha chains (FadJ) and two beta chains (FadI).

The protein localises to the cytoplasm. The enzyme catalyses an acyl-CoA + acetyl-CoA = a 3-oxoacyl-CoA + CoA. It participates in lipid metabolism; fatty acid beta-oxidation. Catalyzes the final step of fatty acid oxidation in which acetyl-CoA is released and the CoA ester of a fatty acid two carbons shorter is formed. The protein is 3-ketoacyl-CoA thiolase of Salmonella paratyphi B (strain ATCC BAA-1250 / SPB7).